The primary structure comprises 232 residues: Ribonuclease 3 (232 aa).

The 130-residue stretch at 5 to 134 (KKALLEQFDL…FLGALLLDKG (130 aa)) folds into the RNase III domain. Glutamate 47 contributes to the Mg(2+) binding site. Residue aspartate 51 is part of the active site. Residues aspartate 120 and glutamate 123 each coordinate Mg(2+). Residue glutamate 123 is part of the active site. Residues 160–229 (DYKTKLQELL…AKNAFEKESS (70 aa)) form the DRBM domain. The interval 203-232 (KSGQGQGRSKKLAEQEAAKNAFEKESSSCF) is disordered. Positions 213 to 232 (KLAEQEAAKNAFEKESSSCF) are enriched in basic and acidic residues.

This sequence belongs to the ribonuclease III family. Homodimer. Requires Mg(2+) as cofactor.

Its subcellular location is the cytoplasm. It carries out the reaction Endonucleolytic cleavage to 5'-phosphomonoester.. Functionally, digests double-stranded RNA. Involved in the processing of primary rRNA transcript to yield the immediate precursors to the large and small rRNAs (23S and 16S). Processes some mRNAs, and tRNAs when they are encoded in the rRNA operon. Processes pre-crRNA and tracrRNA of type II CRISPR loci if present in the organism. This Streptococcus sanguinis (strain SK36) protein is Ribonuclease 3.